The sequence spans 346 residues: PhoH-like protein (346 aa).

Position 142-149 (142-149) interacts with ATP; sequence GPAGTGKT.

It belongs to the PhoH family.

It localises to the cytoplasm. This is PhoH-like protein (ybeZ) from Escherichia coli O157:H7.